We begin with the raw amino-acid sequence, 202 residues long: Casparian strip membrane protein 1 (202 aa).

The segment covering 1-13 (MEKSESSTIQIAE) has biased composition (polar residues). The disordered stretch occupies residues 1 to 30 (MEKSESSTIQIAESSKDRKGKAPLLPPPVH). The Cytoplasmic segment spans residues 1 to 42 (MEKSESSTIQIAESSKDRKGKAPLLPPPVHHERAAGYKRGVA). Residues 43–63 (IFDLILRISAATAALAATIVM) traverse the membrane as a helical segment. The Extracellular portion of the chain corresponds to 64-90 (GTTEQTLPFFTQFFQFRASYDDLPTFT). A helical transmembrane segment spans residues 91-111 (FFVIAMAIVTGYLILSVPFSI). The Cytoplasmic segment spans residues 112-130 (VCIARPVVAAPRILLILCD). A helical membrane pass occupies residues 131–151 (TLTVTLATSAAGASAAIVYLA). Topologically, residues 152-177 (HNGXSDANWLAICQQFNDFCQRVSGA) are extracellular. A helical membrane pass occupies residues 178-198 (VVAAFVSAVLLIFLVVLSAIV). Residues 199 to 202 (LKKH) are Cytoplasmic-facing.

It belongs to the Casparian strip membrane proteins (CASP) family. As to quaternary structure, homodimer and heterodimers.

The protein localises to the cell membrane. Functionally, regulates membrane-cell wall junctions and localized cell wall deposition. Required for establishment of the Casparian strip membrane domain (CSD) and the subsequent formation of Casparian strips, a cell wall modification of the root endodermis that determines an apoplastic barrier between the intraorganismal apoplasm and the extraorganismal apoplasm and prevents lateral diffusion. This is Casparian strip membrane protein 1 from Triphysaria pusilla (Dwarf owl's-clover).